We begin with the raw amino-acid sequence, 269 residues long: uncharacterized protein (269 aa).

This is an uncharacterized protein from Escherichia coli (strain K12).